The sequence spans 157 residues: SsrA-binding protein (157 aa).

It belongs to the SmpB family.

The protein localises to the cytoplasm. Required for rescue of stalled ribosomes mediated by trans-translation. Binds to transfer-messenger RNA (tmRNA), required for stable association of tmRNA with ribosomes. tmRNA and SmpB together mimic tRNA shape, replacing the anticodon stem-loop with SmpB. tmRNA is encoded by the ssrA gene; the 2 termini fold to resemble tRNA(Ala) and it encodes a 'tag peptide', a short internal open reading frame. During trans-translation Ala-aminoacylated tmRNA acts like a tRNA, entering the A-site of stalled ribosomes, displacing the stalled mRNA. The ribosome then switches to translate the ORF on the tmRNA; the nascent peptide is terminated with the 'tag peptide' encoded by the tmRNA and targeted for degradation. The ribosome is freed to recommence translation, which seems to be the essential function of trans-translation. In Syntrophomonas wolfei subsp. wolfei (strain DSM 2245B / Goettingen), this protein is SsrA-binding protein.